The primary structure comprises 110 residues: Coiled-coil-helix-coiled-coil-helix domain-containing protein 5 (110 aa).

An N-acetylmethionine modification is found at Met-1. 2 consecutive CHCH domains span residues 9–52 and 55–97; these read ARYC…PIIR and RQAC…QPPS. 4 short sequence motifs (cx9C motif) span residues 12 to 22, 34 to 44, 58 to 68, and 79 to 89; these read CSRELDQYGQC, CHHLKMSIARC, CAEPFEAFEKC, and CAEHMRRFLQC. Cystine bridges form between Cys-12–Cys-44, Cys-22–Cys-34, Cys-58–Cys-89, and Cys-68–Cys-79.

As to quaternary structure, monomer.

Its subcellular location is the mitochondrion intermembrane space. The chain is Coiled-coil-helix-coiled-coil-helix domain-containing protein 5 (Chchd5) from Mus musculus (Mouse).